The sequence spans 102 residues: Small ribosomal subunit protein uS10 (102 aa).

Belongs to the universal ribosomal protein uS10 family. In terms of assembly, part of the 30S ribosomal subunit.

Its function is as follows. Involved in the binding of tRNA to the ribosomes. The protein is Small ribosomal subunit protein uS10 of Streptococcus mutans serotype c (strain ATCC 700610 / UA159).